The primary structure comprises 488 residues: 3-octaprenyl-4-hydroxybenzoate carboxy-lyase (488 aa).

Asparagine 172 lines the Mn(2+) pocket. Prenylated FMN contacts are provided by residues 175–177, 189–191, and 194–195; these read IYR, RWL, and RG. Glutamate 238 is a binding site for Mn(2+). Aspartate 287 (proton donor) is an active-site residue.

Belongs to the UbiD family. In terms of assembly, homohexamer. Requires prenylated FMN as cofactor. It depends on Mn(2+) as a cofactor.

The protein localises to the cell membrane. The catalysed reaction is a 4-hydroxy-3-(all-trans-polyprenyl)benzoate + H(+) = a 2-(all-trans-polyprenyl)phenol + CO2. Its pathway is cofactor biosynthesis; ubiquinone biosynthesis. Its function is as follows. Catalyzes the decarboxylation of 3-octaprenyl-4-hydroxy benzoate to 2-octaprenylphenol, an intermediate step in ubiquinone biosynthesis. This Ectopseudomonas mendocina (strain ymp) (Pseudomonas mendocina) protein is 3-octaprenyl-4-hydroxybenzoate carboxy-lyase.